The primary structure comprises 225 residues: Phosphoribosylformylglycinamidine synthase subunit PurQ (225 aa).

Residues 4–225 enclose the Glutamine amidotransferase type-1 domain; the sequence is RVGVITFPGT…YSVLDSVISA (222 aa). C87 serves as the catalytic Nucleophile. Residues H196 and E198 contribute to the active site.

Part of the FGAM synthase complex composed of 1 PurL, 1 PurQ and 2 PurS subunits.

Its subcellular location is the cytoplasm. The enzyme catalyses N(2)-formyl-N(1)-(5-phospho-beta-D-ribosyl)glycinamide + L-glutamine + ATP + H2O = 2-formamido-N(1)-(5-O-phospho-beta-D-ribosyl)acetamidine + L-glutamate + ADP + phosphate + H(+). It catalyses the reaction L-glutamine + H2O = L-glutamate + NH4(+). Its pathway is purine metabolism; IMP biosynthesis via de novo pathway; 5-amino-1-(5-phospho-D-ribosyl)imidazole from N(2)-formyl-N(1)-(5-phospho-D-ribosyl)glycinamide: step 1/2. In terms of biological role, part of the phosphoribosylformylglycinamidine synthase complex involved in the purines biosynthetic pathway. Catalyzes the ATP-dependent conversion of formylglycinamide ribonucleotide (FGAR) and glutamine to yield formylglycinamidine ribonucleotide (FGAM) and glutamate. The FGAM synthase complex is composed of three subunits. PurQ produces an ammonia molecule by converting glutamine to glutamate. PurL transfers the ammonia molecule to FGAR to form FGAM in an ATP-dependent manner. PurS interacts with PurQ and PurL and is thought to assist in the transfer of the ammonia molecule from PurQ to PurL. The chain is Phosphoribosylformylglycinamidine synthase subunit PurQ from Rhodococcus jostii (strain RHA1).